We begin with the raw amino-acid sequence, 429 residues long: 3-phosphoshikimate 1-carboxyvinyltransferase (429 aa).

Lys-22, Ser-23, and Arg-27 together coordinate 3-phosphoshikimate. Position 22 (Lys-22) interacts with phosphoenolpyruvate. Phosphoenolpyruvate contacts are provided by Gly-94 and Arg-122. 3-phosphoshikimate-binding residues include Ser-167, Gln-169, Asp-315, and Lys-342. Gln-169 contributes to the phosphoenolpyruvate binding site. Residue Asp-315 is the Proton acceptor of the active site. Positions 346 and 388 each coordinate phosphoenolpyruvate.

The protein belongs to the EPSP synthase family. In terms of assembly, monomer.

It localises to the cytoplasm. The catalysed reaction is 3-phosphoshikimate + phosphoenolpyruvate = 5-O-(1-carboxyvinyl)-3-phosphoshikimate + phosphate. It functions in the pathway metabolic intermediate biosynthesis; chorismate biosynthesis; chorismate from D-erythrose 4-phosphate and phosphoenolpyruvate: step 6/7. In terms of biological role, catalyzes the transfer of the enolpyruvyl moiety of phosphoenolpyruvate (PEP) to the 5-hydroxyl of shikimate-3-phosphate (S3P) to produce enolpyruvyl shikimate-3-phosphate and inorganic phosphate. This Geobacter metallireducens (strain ATCC 53774 / DSM 7210 / GS-15) protein is 3-phosphoshikimate 1-carboxyvinyltransferase.